Consider the following 1346-residue polypeptide: Proline-rich protein 36 (1346 aa).

6 disordered regions span residues 1–403 (MDNK…TQLI), 426–512 (SVSS…QATP), 537–606 (PLTT…PSPL), 633–679 (PRQT…VSPL), 711–1155 (LETQ…AELA), and 1168–1240 (PPLA…RSPK). Over residues 10 to 26 (AGAAARTPAARAPGLLT) the composition is skewed to low complexity. The segment covering 27–40 (PRPPGSPRPPPPVT) has biased composition (pro residues). Low complexity-rich tracts occupy residues 41-55 (PAALRVLGAAGAVGR) and 86-97 (SSRNPASRPPAS). The span at 137-152 (SAEETVARGKATEAPK) shows a compositional bias: basic and acidic residues. Over residues 165-177 (SGPTPGTPSPAMA) the composition is skewed to low complexity. Over residues 191-203 (RPAPSARPRPPTE) the composition is skewed to pro residues. Over residues 208–220 (SVSSASEHSTTEP) the composition is skewed to polar residues. Low complexity-rich tracts occupy residues 235–255 (QRPASRSLSSSATPLSSPARS) and 293–312 (APALGPLSSSPLATPSPSGT). Pro residues-rich tracts occupy residues 329–343 (ATLPPSPPVTPPPPA), 371–380 (PLAPPSPSAP), and 387–397 (PSPPATPPSQV). A compositionally biased stretch (low complexity) spans 426–464 (SVSSPLQSMPPTQANPALPSLPTLLSPLATPPLSAMSPL). The segment covering 494 to 506 (TPPPQASPSPSPP) has biased composition (pro residues). The span at 546–558 (PPLVSPSLLASPP) shows a compositional bias: low complexity. The span at 559 to 578 (LQAPPHPQAPPSMTTPPMQA) shows a compositional bias: pro residues. A compositionally biased stretch (polar residues) spans 633–647 (PRQTQASLISPSRPA). Pro residues predominate over residues 648–657 (STPPDSPPLQ). Positions 658 to 679 (APLSLPASPPLQTSLSPAVSPL) are enriched in low complexity. The segment covering 724–733 (TPPASLTTPP) has biased composition (polar residues). Pro residues-rich tracts occupy residues 781–821 (ETPP…PALA) and 829–865 (PSPPLSPLATPPPQAPPALALPPLQAPPSPPASPPLS). Residues 866–875 (PLATPSPQAP) are compositionally biased toward low complexity. Pro residues-rich tracts occupy residues 887 to 917 (FSPPPSPPVQAPFSPPASPPVSPSATPPSQA), 926 to 997 (LQVP…PPAS), and 1004 to 1015 (AKPPPQAPPALA). Low complexity-rich tracts occupy residues 1029 to 1046 (FPGQAPFSPSASLPMSPL), 1137 to 1146 (DSGPEGGAAA), and 1224 to 1239 (GKAAAGAGAGASSRSP). A Phosphoserine modification is found at S1310.

This chain is Proline-rich protein 36, found in Homo sapiens (Human).